Here is a 575-residue protein sequence, read N- to C-terminus: UvrABC system protein C (575 aa).

A GIY-YIG domain is found at 15–90 (AEPGVYQFEA…IKRHQPRYNV (76 aa)). One can recognise a UVR domain in the interval 198–233 (GVLAEPLRREMETAAASQAFERAASLRDRLEAVETF).

This sequence belongs to the UvrC family. Interacts with UvrB in an incision complex.

Its subcellular location is the cytoplasm. The UvrABC repair system catalyzes the recognition and processing of DNA lesions. UvrC both incises the 5' and 3' sides of the lesion. The N-terminal half is responsible for the 3' incision and the C-terminal half is responsible for the 5' incision. This is UvrABC system protein C from Natronomonas pharaonis (strain ATCC 35678 / DSM 2160 / CIP 103997 / JCM 8858 / NBRC 14720 / NCIMB 2260 / Gabara) (Halobacterium pharaonis).